A 141-amino-acid chain; its full sequence is Large ribosomal subunit protein uL11 (141 aa).

This sequence belongs to the universal ribosomal protein uL11 family. Part of the ribosomal stalk of the 50S ribosomal subunit. Interacts with L10 and the large rRNA to form the base of the stalk. L10 forms an elongated spine to which L12 dimers bind in a sequential fashion forming a multimeric L10(L12)X complex. In terms of processing, one or more lysine residues are methylated.

Forms part of the ribosomal stalk which helps the ribosome interact with GTP-bound translation factors. The chain is Large ribosomal subunit protein uL11 from Phytoplasma australiense.